Consider the following 601-residue polypeptide: Transcription factor ATEG_07666 (601 aa).

A DNA-binding region (zn(2)-C6 fungal-type) is located at residues 17 to 44; the sequence is CEECRRRKARCDRVRPKCGFCTENGMQC.

It is found in the nucleus. In terms of biological role, specific transcriptional regulator for the azasperpyranone A biosynthesis cluster B. This Aspergillus terreus (strain NIH 2624 / FGSC A1156) protein is Transcription factor ATEG_07666.